A 262-amino-acid chain; its full sequence is Small ribosomal subunit protein eS4A (262 aa).

An S4 RNA-binding domain is found at 42 to 105; the sequence is LPLIVFLRNR…GEHFRLVYDI (64 aa).

This sequence belongs to the eukaryotic ribosomal protein eS4 family. As to quaternary structure, component of the small ribosomal subunit (SSU). Mature yeast ribosomes consist of a small (40S) and a large (60S) subunit. The 40S small subunit contains 1 molecule of ribosomal RNA (18S rRNA) and at least 33 different proteins. The large 60S subunit contains 3 rRNA molecules (25S, 5.8S and 5S rRNA) and at least 46 different proteins.

The protein localises to the cytoplasm. Component of the ribosome, a large ribonucleoprotein complex responsible for the synthesis of proteins in the cell. The small ribosomal subunit (SSU) binds messenger RNAs (mRNAs) and translates the encoded message by selecting cognate aminoacyl-transfer RNA (tRNA) molecules. The large subunit (LSU) contains the ribosomal catalytic site termed the peptidyl transferase center (PTC), which catalyzes the formation of peptide bonds, thereby polymerizing the amino acids delivered by tRNAs into a polypeptide chain. The nascent polypeptides leave the ribosome through a tunnel in the LSU and interact with protein factors that function in enzymatic processing, targeting, and the membrane insertion of nascent chains at the exit of the ribosomal tunnel. The sequence is that of Small ribosomal subunit protein eS4A (rps401) from Schizosaccharomyces pombe (strain 972 / ATCC 24843) (Fission yeast).